A 122-amino-acid polypeptide reads, in one-letter code: Large ribosomal subunit protein uL14 (122 aa).

Belongs to the universal ribosomal protein uL14 family. Part of the 50S ribosomal subunit. Forms a cluster with proteins L3 and L19. In the 70S ribosome, L14 and L19 interact and together make contacts with the 16S rRNA in bridges B5 and B8.

In terms of biological role, binds to 23S rRNA. Forms part of two intersubunit bridges in the 70S ribosome. This is Large ribosomal subunit protein uL14 from Renibacterium salmoninarum (strain ATCC 33209 / DSM 20767 / JCM 11484 / NBRC 15589 / NCIMB 2235).